The following is a 412-amino-acid chain: 8-amino-7-oxononanoate synthase (412 aa).

106-107 provides a ligand contact to pyridoxal 5'-phosphate; sequence GY. His-131 contributes to the substrate binding site. Pyridoxal 5'-phosphate contacts are provided by Ser-187, His-219, and Thr-247. N6-(pyridoxal phosphate)lysine is present on Lys-250. Position 370 (Thr-370) interacts with substrate.

Belongs to the class-II pyridoxal-phosphate-dependent aminotransferase family. BioF subfamily. In terms of assembly, homodimer. Pyridoxal 5'-phosphate serves as cofactor.

It catalyses the reaction 6-carboxyhexanoyl-[ACP] + L-alanine + H(+) = (8S)-8-amino-7-oxononanoate + holo-[ACP] + CO2. It functions in the pathway cofactor biosynthesis; biotin biosynthesis. In terms of biological role, 8-amino-7-oxononanoate synthase; part of the cluster involved in the biosynthesis of biotin (also known as vitamin B8 or vitamin H), a water-soluble vitamin that functions as a prosthetic group of many carboxylases, such as acetyl-CoA carboxylase and pyruvate carboxylase. Catalyzes the decarboxylative condensation of pimeloyl-[acyl-carrier protein] and L-alanine to produce 8-amino-7-oxononanoate (AON). The polypeptide is 8-amino-7-oxononanoate synthase (Emericella nidulans (strain FGSC A4 / ATCC 38163 / CBS 112.46 / NRRL 194 / M139) (Aspergillus nidulans)).